The sequence spans 94 residues: Large ribosomal subunit protein bL25 (94 aa).

It belongs to the bacterial ribosomal protein bL25 family. Part of the 50S ribosomal subunit; part of the 5S rRNA/L5/L18/L25 subcomplex. Contacts the 5S rRNA. Binds to the 5S rRNA independently of L5 and L18.

In terms of biological role, this is one of the proteins that binds to the 5S RNA in the ribosome where it forms part of the central protuberance. The sequence is that of Large ribosomal subunit protein bL25 from Erwinia tasmaniensis (strain DSM 17950 / CFBP 7177 / CIP 109463 / NCPPB 4357 / Et1/99).